Consider the following 363-residue polypeptide: Phospho-N-acetylmuramoyl-pentapeptide-transferase (363 aa).

10 helical membrane passes run 3-23 (TVLIAGAFSLVVSLFGTPLYI), 55-75 (VVIILAALLAYGAAHLFTGAL), 76-96 (PTVSGLLVLLLMTGLGVVGFL), 116-136 (LAGQGLVGIVFAVLALQFPAA), 158-178 (LAVFGAVGGTVLFVVWALIIT), 190-210 (GLDGLATGATTMVLAAYVLIC), 237-257 (LAVVAAAVMGACFGFLWWNAS), 261-281 (IFMGDTGSLALGGALAGLAIL), 286-306 (ILLVLLGGLFVLITLSVILQV), and 340-360 (FWIIAGLFVFLGLGVFYAEWV).

The protein belongs to the glycosyltransferase 4 family. MraY subfamily. The cofactor is Mg(2+).

Its subcellular location is the cell membrane. It catalyses the reaction UDP-N-acetyl-alpha-D-muramoyl-L-alanyl-gamma-D-glutamyl-meso-2,6-diaminopimeloyl-D-alanyl-D-alanine + di-trans,octa-cis-undecaprenyl phosphate = di-trans,octa-cis-undecaprenyl diphospho-N-acetyl-alpha-D-muramoyl-L-alanyl-D-glutamyl-meso-2,6-diaminopimeloyl-D-alanyl-D-alanine + UMP. The protein operates within cell wall biogenesis; peptidoglycan biosynthesis. Functionally, catalyzes the initial step of the lipid cycle reactions in the biosynthesis of the cell wall peptidoglycan: transfers peptidoglycan precursor phospho-MurNAc-pentapeptide from UDP-MurNAc-pentapeptide onto the lipid carrier undecaprenyl phosphate, yielding undecaprenyl-pyrophosphoryl-MurNAc-pentapeptide, known as lipid I. This Kineococcus radiotolerans (strain ATCC BAA-149 / DSM 14245 / SRS30216) protein is Phospho-N-acetylmuramoyl-pentapeptide-transferase.